Here is a 300-residue protein sequence, read N- to C-terminus: uncharacterized protein (300 aa).

10 helical membrane-spanning segments follow: residues 4 to 24, 31 to 51, 68 to 88, 95 to 115, 120 to 140, 146 to 166, 177 to 197, 214 to 234, 242 to 262, and 272 to 292; these read IIII…WIAM, IPPF…LIIL, FQIF…LYGG, ISSI…HFYL, NFIQ…VLLI, CFFQ…HAVI, VSVI…LSII, ILAV…SYFY, FYAS…EIYI, and LWFI…INFF. EamA domains follow at residues 15–139 and 161–287; these read ITWG…FVLL and LSHA…LTLI.

This sequence belongs to the EamA transporter family.

The protein localises to the cell membrane. This is an uncharacterized protein from Buchnera aphidicola subsp. Schizaphis graminum (strain Sg).